A 318-amino-acid polypeptide reads, in one-letter code: NADH-ubiquinone oxidoreductase chain 1 (318 aa).

A run of 8 helical transmembrane segments spans residues 5–25 (IISS…LTLI), 69–89 (SIFL…ILWI), 102–122 (LGLM…LTSG), 148–168 (LGLM…KLFI), 174–194 (IWLL…TLAE), 215–235 (VEFS…NILF), 253–273 (LYFS…FLWV), and 293–313 (FLPI…FFGV).

It belongs to the complex I subunit 1 family.

The protein resides in the mitochondrion inner membrane. The catalysed reaction is a ubiquinone + NADH + 5 H(+)(in) = a ubiquinol + NAD(+) + 4 H(+)(out). In terms of biological role, core subunit of the mitochondrial membrane respiratory chain NADH dehydrogenase (Complex I) that is believed to belong to the minimal assembly required for catalysis. Complex I functions in the transfer of electrons from NADH to the respiratory chain. The immediate electron acceptor for the enzyme is believed to be ubiquinone. The chain is NADH-ubiquinone oxidoreductase chain 1 (MT-ND1) from Myxine glutinosa (Atlantic hagfish).